The primary structure comprises 101 residues: Urease subunit beta (101 aa).

It belongs to the urease beta subunit family. As to quaternary structure, heterotrimer of UreA (gamma), UreB (beta) and UreC (alpha) subunits. Three heterotrimers associate to form the active enzyme.

Its subcellular location is the cytoplasm. It catalyses the reaction urea + 2 H2O + H(+) = hydrogencarbonate + 2 NH4(+). It functions in the pathway nitrogen metabolism; urea degradation; CO(2) and NH(3) from urea (urease route): step 1/1. In Mesorhizobium japonicum (strain LMG 29417 / CECT 9101 / MAFF 303099) (Mesorhizobium loti (strain MAFF 303099)), this protein is Urease subunit beta.